The following is a 705-amino-acid chain: Ribosomal RNA large subunit methyltransferase K/L (705 aa).

One can recognise a THUMP domain in the interval 43 to 154; sequence VVYRCCLWSR…GEKGILGFDL (112 aa).

The protein belongs to the methyltransferase superfamily. RlmKL family.

The protein localises to the cytoplasm. It catalyses the reaction guanosine(2445) in 23S rRNA + S-adenosyl-L-methionine = N(2)-methylguanosine(2445) in 23S rRNA + S-adenosyl-L-homocysteine + H(+). The catalysed reaction is guanosine(2069) in 23S rRNA + S-adenosyl-L-methionine = N(2)-methylguanosine(2069) in 23S rRNA + S-adenosyl-L-homocysteine + H(+). Its function is as follows. Specifically methylates the guanine in position 2445 (m2G2445) and the guanine in position 2069 (m7G2069) of 23S rRNA. In Aliivibrio fischeri (strain ATCC 700601 / ES114) (Vibrio fischeri), this protein is Ribosomal RNA large subunit methyltransferase K/L.